A 208-amino-acid chain; its full sequence is Octanoyltransferase (208 aa).

Residues 30–208 (GTASEAVFIL…ILKQEFYKIF (179 aa)) form the BPL/LPL catalytic domain. Residues 69-76 (RGGKFTYH), 142-144 (SIG), and 155-157 (GVA) contribute to the substrate site. The active-site Acyl-thioester intermediate is cysteine 173.

The protein belongs to the LipB family.

It is found in the cytoplasm. It carries out the reaction octanoyl-[ACP] + L-lysyl-[protein] = N(6)-octanoyl-L-lysyl-[protein] + holo-[ACP] + H(+). It participates in protein modification; protein lipoylation via endogenous pathway; protein N(6)-(lipoyl)lysine from octanoyl-[acyl-carrier-protein]: step 1/2. In terms of biological role, catalyzes the transfer of endogenously produced octanoic acid from octanoyl-acyl-carrier-protein onto the lipoyl domains of lipoate-dependent enzymes. Lipoyl-ACP can also act as a substrate although octanoyl-ACP is likely to be the physiological substrate. The polypeptide is Octanoyltransferase (Orientia tsutsugamushi (strain Ikeda) (Rickettsia tsutsugamushi)).